We begin with the raw amino-acid sequence, 232 residues long: Putative N-acetylmannosamine-6-phosphate 2-epimerase (232 aa).

The protein belongs to the NanE family.

The catalysed reaction is an N-acyl-D-glucosamine 6-phosphate = an N-acyl-D-mannosamine 6-phosphate. Its pathway is amino-sugar metabolism; N-acetylneuraminate degradation; D-fructose 6-phosphate from N-acetylneuraminate: step 3/5. Converts N-acetylmannosamine-6-phosphate (ManNAc-6-P) to N-acetylglucosamine-6-phosphate (GlcNAc-6-P). This Borreliella burgdorferi (strain ZS7) (Borrelia burgdorferi) protein is Putative N-acetylmannosamine-6-phosphate 2-epimerase.